A 620-amino-acid chain; its full sequence is Glutathione-regulated potassium-efflux system protein KefC (620 aa).

Helical transmembrane passes span H4–V24, L26–L46, S54–L74, G90–L110, V114–M134, F149–L169, M178–L198, V218–G238, G270–L290, L294–I314, W327–Q347, and S359–N379. One can recognise an RCK N-terminal domain in the interval Q399–T518. The disordered stretch occupies residues G597–S620.

The protein belongs to the monovalent cation:proton antiporter 2 (CPA2) transporter (TC 2.A.37) family. KefC subfamily. Homodimer. Interacts with the regulatory subunit KefF.

The protein resides in the cell inner membrane. Functionally, pore-forming subunit of a potassium efflux system that confers protection against electrophiles. Catalyzes K(+)/H(+) antiport. The polypeptide is Glutathione-regulated potassium-efflux system protein KefC (Escherichia coli O6:K15:H31 (strain 536 / UPEC)).